Reading from the N-terminus, the 449-residue chain is Phosphoglucosamine mutase (449 aa).

S102 functions as the Phosphoserine intermediate in the catalytic mechanism. The Mg(2+) site is built by S102, D241, D243, and D245. S102 bears the Phosphoserine mark.

It belongs to the phosphohexose mutase family. Mg(2+) is required as a cofactor. Post-translationally, activated by phosphorylation.

It carries out the reaction alpha-D-glucosamine 1-phosphate = D-glucosamine 6-phosphate. Functionally, catalyzes the conversion of glucosamine-6-phosphate to glucosamine-1-phosphate. In Roseobacter denitrificans (strain ATCC 33942 / OCh 114) (Erythrobacter sp. (strain OCh 114)), this protein is Phosphoglucosamine mutase.